Consider the following 256-residue polypeptide: Pyridoxine 5'-phosphate synthase (256 aa).

2 residues coordinate 3-amino-2-oxopropyl phosphate: N8 and R19. Catalysis depends on H44, which acts as the Proton acceptor. 2 residues coordinate 1-deoxy-D-xylulose 5-phosphate: R46 and H51. The active-site Proton acceptor is the E74. T111 provides a ligand contact to 1-deoxy-D-xylulose 5-phosphate. The active-site Proton donor is the H202. Residues D203 and 225–226 (GH) contribute to the 3-amino-2-oxopropyl phosphate site.

This sequence belongs to the PNP synthase family. In terms of assembly, homooctamer; tetramer of dimers.

The protein resides in the cytoplasm. The catalysed reaction is 3-amino-2-oxopropyl phosphate + 1-deoxy-D-xylulose 5-phosphate = pyridoxine 5'-phosphate + phosphate + 2 H2O + H(+). Its pathway is cofactor biosynthesis; pyridoxine 5'-phosphate biosynthesis; pyridoxine 5'-phosphate from D-erythrose 4-phosphate: step 5/5. Functionally, catalyzes the complicated ring closure reaction between the two acyclic compounds 1-deoxy-D-xylulose-5-phosphate (DXP) and 3-amino-2-oxopropyl phosphate (1-amino-acetone-3-phosphate or AAP) to form pyridoxine 5'-phosphate (PNP) and inorganic phosphate. The sequence is that of Pyridoxine 5'-phosphate synthase from Xanthomonas campestris pv. campestris (strain 8004).